The chain runs to 419 residues: Serine/threonine-protein kinase Kist (419 aa).

The region spanning tryptophan 23–phenylalanine 303 is the Protein kinase domain. ATP-binding positions include leucine 29–valine 37 and lysine 54. Catalysis depends on aspartate 158, which acts as the Proton acceptor. The RRM domain maps to leucine 323 to proline 405.

This sequence belongs to the protein kinase superfamily. Ser/Thr protein kinase family. Interacts with PAM and CDKN1B/p27Kip1. Interacts with stathmin.

Its subcellular location is the nucleus. The catalysed reaction is L-seryl-[protein] + ATP = O-phospho-L-seryl-[protein] + ADP + H(+). It catalyses the reaction L-threonyl-[protein] + ATP = O-phospho-L-threonyl-[protein] + ADP + H(+). Its function is as follows. Upon serum stimulation, phosphorylates CDKN1B/p27Kip1, thus controlling CDKN1B subcellular location and cell cycle progression in G1 phase. May be involved in trafficking and/or processing of RNA. This Mus musculus (Mouse) protein is Serine/threonine-protein kinase Kist (Uhmk1).